The chain runs to 639 residues: 1-deoxy-D-xylulose-5-phosphate synthase (639 aa).

Thiamine diphosphate is bound by residues His79 and 120–122 (AHS). Asp151 contacts Mg(2+). Thiamine diphosphate contacts are provided by residues 152-153 (GA), Asn180, Tyr289, and Glu371. Residue Asn180 participates in Mg(2+) binding.

The protein belongs to the transketolase family. DXPS subfamily. In terms of assembly, homodimer. It depends on Mg(2+) as a cofactor. The cofactor is thiamine diphosphate.

It carries out the reaction D-glyceraldehyde 3-phosphate + pyruvate + H(+) = 1-deoxy-D-xylulose 5-phosphate + CO2. It participates in metabolic intermediate biosynthesis; 1-deoxy-D-xylulose 5-phosphate biosynthesis; 1-deoxy-D-xylulose 5-phosphate from D-glyceraldehyde 3-phosphate and pyruvate: step 1/1. Its function is as follows. Catalyzes the acyloin condensation reaction between C atoms 2 and 3 of pyruvate and glyceraldehyde 3-phosphate to yield 1-deoxy-D-xylulose-5-phosphate (DXP). The polypeptide is 1-deoxy-D-xylulose-5-phosphate synthase (Rhizorhabdus wittichii (strain DSM 6014 / CCUG 31198 / JCM 15750 / NBRC 105917 / EY 4224 / RW1) (Sphingomonas wittichii)).